A 143-amino-acid chain; its full sequence is Transcriptional regulator MraZ (143 aa).

SpoVT-AbrB domains are found at residues 5-47 (EYEH…TLEE) and 76-119 (AVEV…DRET).

The protein belongs to the MraZ family. In terms of assembly, forms oligomers.

It localises to the cytoplasm. It is found in the nucleoid. This chain is Transcriptional regulator MraZ, found in Staphylococcus saprophyticus subsp. saprophyticus (strain ATCC 15305 / DSM 20229 / NCIMB 8711 / NCTC 7292 / S-41).